The following is a 371-amino-acid chain: uncharacterized protein (371 aa).

Positions 20 to 250 constitute an ABC transporter domain; the sequence is VTIRNVTKRY…PANIFVAGFI (231 aa). 52 to 59 is an ATP binding site; the sequence is GPSGCGKS.

Belongs to the ABC transporter superfamily.

Its subcellular location is the cell inner membrane. Its function is as follows. Probably part of a binding-protein-dependent transport system y4oPQRS. This system probably transports a sugar-like molecule. Probably responsible for energy coupling to the transport system. This is an uncharacterized protein from Sinorhizobium fredii (strain NBRC 101917 / NGR234).